A 205-amino-acid chain; its full sequence is Arginine exporter protein ArgO (205 aa).

The next 6 membrane-spanning stretches (helical) occupy residues 1–21 (MLAVYLHGFILSAAMILPLGP), 42–62 (LCALSDIILICAGIFGGSALL), 67–87 (LLLALVTWGGVAFLMWYGWGA), 111–131 (ILVTLLAVTWLNPHVYLDTFV), 147–167 (WFALGAVTASIVWFFALALLA), and 185–205 (LFVGGVMGFIAFQLARQGFGL).

This sequence belongs to the LysE/ArgO transporter (TC 2.A.75) family.

Its subcellular location is the cell inner membrane. The catalysed reaction is L-arginine(in) = L-arginine(out). In terms of biological role, involved in the export of arginine. Important to control the intracellular level of arginine and the correct balance between arginine and lysine. This chain is Arginine exporter protein ArgO, found in Yersinia pseudotuberculosis serotype IB (strain PB1/+).